The following is a 539-amino-acid chain: Probable quinate permease (539 aa).

Residues 1–22 (MSILSMVEDRPTPKEVYNWRIY) lie on the Cytoplasmic side of the membrane. The helical transmembrane segment at 23–43 (LLAAVASFTSCMIGYDSAFIG) threads the bilayer. Over 44 to 74 (TTISLDSFKNEFHWDSMSTAKQNLVSANIVS) the chain is Extracellular. A helical membrane pass occupies residues 75-95 (CYQAGAFFGAFFAYPIGHFWG). The Cytoplasmic segment spans residues 96–97 (RK). The chain crosses the membrane as a helical span at residues 98–118 (WGLMLSALVFTLGAGLMLGAN). The Extracellular segment spans residues 119–130 (GDRGLGLIYGGR). The helical transmembrane segment at 131-151 (VLAGLGVGAGSNFTPIYISEL) threads the bilayer. The Cytoplasmic portion of the chain corresponds to 152-159 (APPAIRGR). The chain crosses the membrane as a helical span at residues 160-180 (LVGVYELGWQVGGLVGFWINY). Residues 181 to 193 (GVEQTMAPSHKQW) lie on the Extracellular side of the membrane. A helical transmembrane segment spans residues 194–214 (LIPFAVQLIPAGLLIIGILFV). The Cytoplasmic portion of the chain corresponds to 215 to 285 (KESPRWLFLR…AWTNKRILYR (71 aa)). A helical membrane pass occupies residues 286-306 (LFLGSMLFFWQNGSGINAINY). Residues 307-325 (YSPTVFKSIGLKGNSSSLL) lie on the Extracellular side of the membrane. A helical membrane pass occupies residues 326–346 (TTGIFGVVKTVVTIVWLLYLI). Residues 347–352 (DHVGRR) lie on the Cytoplasmic side of the membrane. Residues 353-373 (LLLLIGAAGGSICMWIVGAYI) traverse the membrane as a helical segment. Over 374-387 (KVVDPTHNQSDHLN) the chain is Extracellular. Residues 388–408 (GGGVAAIFFFYLWTAFYTPSW) traverse the membrane as a helical segment. The Cytoplasmic segment spans residues 409–456 (NGTPWVINSEMFDPNIRSLAQACAAGSNWLWNFLISRFTPQMFAKMDY). Residues 457-477 (GVYFFFASLMLLSIPFVFFLV) form a helical membrane-spanning segment. Topologically, residues 478–539 (PETKGIPLEN…EQVEDTDRKE (62 aa)) are extracellular.

It belongs to the major facilitator superfamily. Sugar transporter (TC 2.A.1.1) family. Interacts with creB. In terms of processing, ubiquitinated. Deubiquitinated by creB, probably to control its activity or amount.

The protein localises to the cell membrane. In terms of biological role, integral membrane transporter that imports quinic acid to be catabolized as a carbon source. The sequence is that of Probable quinate permease (qutD) from Aspergillus niger (strain ATCC MYA-4892 / CBS 513.88 / FGSC A1513).